The chain runs to 615 residues: Chaperone protein HscA homolog (615 aa).

Belongs to the heat shock protein 70 family.

Functionally, chaperone involved in the maturation of iron-sulfur cluster-containing proteins. Has a low intrinsic ATPase activity which is markedly stimulated by HscB. The polypeptide is Chaperone protein HscA homolog (Aeromonas salmonicida (strain A449)).